The chain runs to 156 residues: Putative pre-16S rRNA nuclease (156 aa).

It belongs to the YqgF nuclease family.

The protein resides in the cytoplasm. Its function is as follows. Could be a nuclease involved in processing of the 5'-end of pre-16S rRNA. The protein is Putative pre-16S rRNA nuclease of Gloeobacter violaceus (strain ATCC 29082 / PCC 7421).